The following is a 211-amino-acid chain: uncharacterized protein (211 aa).

Positions 187 to 211 (LKVSEQENSEAPVSEPKEDEKTKKD) are disordered. Basic and acidic residues predominate over residues 201 to 211 (EPKEDEKTKKD).

This is an uncharacterized protein from Spiroplasma citri.